Reading from the N-terminus, the 556-residue chain is Phenylalanine--tRNA ligase beta subunit (556 aa).

The B5 domain occupies 278–353 (LTPKEFEVEL…IAYGYNNIEP (76 aa)). 4 residues coordinate Mg(2+): Asp-331, Asp-337, Glu-340, and Asp-341.

It belongs to the phenylalanyl-tRNA synthetase beta subunit family. Type 2 subfamily. As to quaternary structure, tetramer of two alpha and two beta subunits. It depends on Mg(2+) as a cofactor.

Its subcellular location is the cytoplasm. The enzyme catalyses tRNA(Phe) + L-phenylalanine + ATP = L-phenylalanyl-tRNA(Phe) + AMP + diphosphate + H(+). The protein is Phenylalanine--tRNA ligase beta subunit of Pyrococcus horikoshii (strain ATCC 700860 / DSM 12428 / JCM 9974 / NBRC 100139 / OT-3).